Consider the following 323-residue polypeptide: Acetyl-coenzyme A carboxylase carboxyl transferase subunit alpha (323 aa).

Residues 39 to 293 (RLSKKSQQLT…RRALGDSLRQ (255 aa)) enclose the CoA carboxyltransferase C-terminal domain.

The protein belongs to the AccA family. In terms of assembly, acetyl-CoA carboxylase is a heterohexamer composed of biotin carboxyl carrier protein (AccB), biotin carboxylase (AccC) and two subunits each of ACCase subunit alpha (AccA) and ACCase subunit beta (AccD).

Its subcellular location is the cytoplasm. It catalyses the reaction N(6)-carboxybiotinyl-L-lysyl-[protein] + acetyl-CoA = N(6)-biotinyl-L-lysyl-[protein] + malonyl-CoA. It functions in the pathway lipid metabolism; malonyl-CoA biosynthesis; malonyl-CoA from acetyl-CoA: step 1/1. Component of the acetyl coenzyme A carboxylase (ACC) complex. First, biotin carboxylase catalyzes the carboxylation of biotin on its carrier protein (BCCP) and then the CO(2) group is transferred by the carboxyltransferase to acetyl-CoA to form malonyl-CoA. This is Acetyl-coenzyme A carboxylase carboxyl transferase subunit alpha from Burkholderia pseudomallei (strain 1106a).